Consider the following 375-residue polypeptide: N5-carboxyaminoimidazole ribonucleotide synthase (375 aa).

ATP contacts are provided by residues arginine 108, lysine 148, 153–159, 183–186, glutamate 191, histidine 214, and 266–267; these read GYDGKGQ, EQYL, and NE. One can recognise an ATP-grasp domain in the interval 112–296; the sequence is KQTLLEANTQ…QFDTHILAIT (185 aa).

The protein belongs to the PurK/PurT family. In terms of assembly, homodimer.

The enzyme catalyses 5-amino-1-(5-phospho-beta-D-ribosyl)imidazole + hydrogencarbonate + ATP = 5-carboxyamino-1-(5-phospho-D-ribosyl)imidazole + ADP + phosphate + 2 H(+). The protein operates within purine metabolism; IMP biosynthesis via de novo pathway; 5-amino-1-(5-phospho-D-ribosyl)imidazole-4-carboxylate from 5-amino-1-(5-phospho-D-ribosyl)imidazole (N5-CAIR route): step 1/2. Catalyzes the ATP-dependent conversion of 5-aminoimidazole ribonucleotide (AIR) and HCO(3)(-) to N5-carboxyaminoimidazole ribonucleotide (N5-CAIR). In Staphylococcus epidermidis (strain ATCC 12228 / FDA PCI 1200), this protein is N5-carboxyaminoimidazole ribonucleotide synthase.